Reading from the N-terminus, the 499-residue chain is ATP synthase subunit alpha, chloroplastic (499 aa).

An ATP-binding site is contributed by 170–177 (GDRQTGKT).

This sequence belongs to the ATPase alpha/beta chains family. In terms of assembly, F-type ATPases have 2 components, CF(1) - the catalytic core - and CF(0) - the membrane proton channel. CF(1) has five subunits: alpha(3), beta(3), gamma(1), delta(1), epsilon(1). CF(0) has four main subunits: a, b, b' and c.

It is found in the plastid. The protein localises to the chloroplast thylakoid membrane. The catalysed reaction is ATP + H2O + 4 H(+)(in) = ADP + phosphate + 5 H(+)(out). Functionally, produces ATP from ADP in the presence of a proton gradient across the membrane. The alpha chain is a regulatory subunit. This Emiliania huxleyi (Coccolithophore) protein is ATP synthase subunit alpha, chloroplastic.